We begin with the raw amino-acid sequence, 367 residues long: Chorismate synthase (367 aa).

Arginine 48 contributes to the NADP(+) binding site. Residues 125–127, glycine 290, 305–309, and arginine 333 each bind FMN; these read RAS and KPTSS.

This sequence belongs to the chorismate synthase family. In terms of assembly, homotetramer. FMNH2 is required as a cofactor.

The catalysed reaction is 5-O-(1-carboxyvinyl)-3-phosphoshikimate = chorismate + phosphate. It functions in the pathway metabolic intermediate biosynthesis; chorismate biosynthesis; chorismate from D-erythrose 4-phosphate and phosphoenolpyruvate: step 7/7. In terms of biological role, catalyzes the anti-1,4-elimination of the C-3 phosphate and the C-6 proR hydrogen from 5-enolpyruvylshikimate-3-phosphate (EPSP) to yield chorismate, which is the branch point compound that serves as the starting substrate for the three terminal pathways of aromatic amino acid biosynthesis. This reaction introduces a second double bond into the aromatic ring system. The polypeptide is Chorismate synthase (Protochlamydia amoebophila (strain UWE25)).